The primary structure comprises 379 residues: Putative phosphatidate phosphatase (379 aa).

A disordered region spans residues 1-53 (MPAVKIIMSTETSASETTPLRRSENETPDHKELAQSNSNSRQTTVNSNNNNYS). Positions 9–18 (STETSASETT) are enriched in polar residues. The span at 19-33 (PLRRSENETPDHKEL) shows a compositional bias: basic and acidic residues. Residues 35–53 (QSNSNSRQTTVNSNNNNYS) are compositionally biased toward low complexity. A glycan (N-linked (GlcNAc...) asparagine) is linked at asparagine 51. The next 2 helical transmembrane spans lie at 90-110 (VGLD…FFLL) and 138-158 (MLYF…EVII). Asparagine 169 carries N-linked (GlcNAc...) asparagine glycosylation. Transmembrane regions (helical) follow at residues 266–286 (SFPS…ALYL) and 330–350 (AGSL…SDLF).

Belongs to the PA-phosphatase related phosphoesterase family. In terms of assembly, homodimer. This complex seems not to be involved in substrate recognition, it may confer only structural or functional stability. As to expression, expressed in embryonic gut in a pattern that guides germ cells towards mesoderm (initially in hindgut and then on lower side of gut). During extended germ band stage, expressed in ectoderm as a medial band throughout the trunk.

It is found in the membrane. It catalyses the reaction a 1,2-diacyl-sn-glycero-3-phosphate + H2O = a 1,2-diacyl-sn-glycerol + phosphate. Responsible for guiding the germ cells early in the process of migration from the lumen of the developing gut towards the overlying mesoderm, where the germ cells enter the gonads. May be involved in lipid metabolism. This chain is Putative phosphatidate phosphatase (wun), found in Drosophila melanogaster (Fruit fly).